The sequence spans 264 residues: tRNA1(Val) (adenine(37)-N6)-methyltransferase (264 aa).

It belongs to the methyltransferase superfamily. tRNA (adenine-N(6)-)-methyltransferase family.

It is found in the cytoplasm. It carries out the reaction adenosine(37) in tRNA1(Val) + S-adenosyl-L-methionine = N(6)-methyladenosine(37) in tRNA1(Val) + S-adenosyl-L-homocysteine + H(+). Functionally, specifically methylates the adenine in position 37 of tRNA(1)(Val) (anticodon cmo5UAC). This Shewanella pealeana (strain ATCC 700345 / ANG-SQ1) protein is tRNA1(Val) (adenine(37)-N6)-methyltransferase.